Reading from the N-terminus, the 264-residue chain is Proliferating cell nuclear antigen 2 (264 aa).

A DNA-binding region spans residues 61 to 80 (RCDRNLSMGMNLGNMSKMLK).

The protein belongs to the PCNA family. Homo- and heterotrimer. Interacts with POLH, ATXR5 and ATXR6.

The protein resides in the nucleus. Its function is as follows. This protein is an auxiliary protein of DNA polymerase delta and is involved in the control of eukaryotic DNA replication by increasing the polymerase's processibility during elongation of the leading strand. May be involved in UV resistance. The protein is Proliferating cell nuclear antigen 2 (PCNA2) of Arabidopsis thaliana (Mouse-ear cress).